A 101-amino-acid chain; its full sequence is Iron-sulfur cluster assembly protein CyaY (101 aa).

Belongs to the frataxin family.

Functionally, involved in iron-sulfur (Fe-S) cluster assembly. May act as a regulator of Fe-S biogenesis. In Actinobacillus pleuropneumoniae serotype 5b (strain L20), this protein is Iron-sulfur cluster assembly protein CyaY.